We begin with the raw amino-acid sequence, 244 residues long: Putative ribosomal recycling factor, mitochondrial (244 aa).

It belongs to the RRF family.

It is found in the mitochondrion. Its function is as follows. Necessary for protein synthesis in mitochondria. Functions as a ribosome recycling factor in mitochondria. This chain is Putative ribosomal recycling factor, mitochondrial (rrf1), found in Schizosaccharomyces pombe (strain 972 / ATCC 24843) (Fission yeast).